The chain runs to 551 residues: Glucose-6-phosphate isomerase 2 (551 aa).

Catalysis depends on glutamate 353, which acts as the Proton donor. Catalysis depends on residues histidine 384 and lysine 512.

It belongs to the GPI family.

It localises to the cytoplasm. It catalyses the reaction alpha-D-glucose 6-phosphate = beta-D-fructose 6-phosphate. The protein operates within carbohydrate biosynthesis; gluconeogenesis. It functions in the pathway carbohydrate degradation; glycolysis; D-glyceraldehyde 3-phosphate and glycerone phosphate from D-glucose: step 2/4. Functionally, catalyzes the reversible isomerization of glucose-6-phosphate to fructose-6-phosphate. The sequence is that of Glucose-6-phosphate isomerase 2 from Colwellia psychrerythraea (strain 34H / ATCC BAA-681) (Vibrio psychroerythus).